The following is a 616-amino-acid chain: Chaperone protein HscA (616 aa).

The protein belongs to the heat shock protein 70 family.

Its function is as follows. Chaperone involved in the maturation of iron-sulfur cluster-containing proteins. Has a low intrinsic ATPase activity which is markedly stimulated by HscB. Involved in the maturation of IscU. This chain is Chaperone protein HscA, found in Salmonella arizonae (strain ATCC BAA-731 / CDC346-86 / RSK2980).